Consider the following 275-residue polypeptide: Membrane protein insertase YidC (275 aa).

The N-terminal stretch at 1–22 is a signal peptide; the sequence is MKKYKRLLLMAGLVTLVFVLSA. Residue Cys23 is the site of N-palmitoyl cysteine attachment. Cys23 is lipidated: S-diacylglycerol cysteine. 4 helical membrane passes run 53-73, 127-147, 169-189, and 206-226; these read LGGSVGIGIILFTLVIRIILL, YIGCLPLLVQLPIMMALYQAI, YLILPILAAVFTFASTYLSSM, and PAMIFFMGISLASSLSLYWVV. The segment covering 249-266 has biased composition (basic and acidic residues); that stretch reads EEAARQAKARERALERAK. The interval 249–275 is disordered; that stretch reads EEAARQAKARERALERAKSPKKKGKKK.

Belongs to the OXA1/ALB3/YidC family. Type 2 subfamily.

It localises to the cell membrane. Functionally, required for the insertion and/or proper folding and/or complex formation of integral membrane proteins into the membrane. Involved in integration of membrane proteins that insert both dependently and independently of the Sec translocase complex, as well as at least some lipoproteins. This chain is Membrane protein insertase YidC, found in Enterococcus faecalis (strain ATCC 700802 / V583).